Reading from the N-terminus, the 156-residue chain is Transcription elongation factor GreA 1 (156 aa).

Residues 43 to 74 adopt a coiled-coil conformation; that stretch reads RSENAEYSSAKRDLGRLESRLRYLNKQLQYAQ.

The protein belongs to the GreA/GreB family.

Necessary for efficient RNA polymerase transcription elongation past template-encoded arresting sites. The arresting sites in DNA have the property of trapping a certain fraction of elongating RNA polymerases that pass through, resulting in locked ternary complexes. Cleavage of the nascent transcript by cleavage factors such as GreA or GreB allows the resumption of elongation from the new 3'terminus. GreA releases sequences of 2 to 3 nucleotides. This Lactiplantibacillus plantarum (strain ATCC BAA-793 / NCIMB 8826 / WCFS1) (Lactobacillus plantarum) protein is Transcription elongation factor GreA 1.